The following is a 161-amino-acid chain: Putative pre-16S rRNA nuclease (161 aa).

Belongs to the YqgF nuclease family.

The protein resides in the cytoplasm. In terms of biological role, could be a nuclease involved in processing of the 5'-end of pre-16S rRNA. The protein is Putative pre-16S rRNA nuclease of Methylocella silvestris (strain DSM 15510 / CIP 108128 / LMG 27833 / NCIMB 13906 / BL2).